We begin with the raw amino-acid sequence, 187 residues long: uncharacterized protein (187 aa).

This sequence belongs to the isochorismatase family.

This is an uncharacterized protein from Bacillus subtilis (strain 168).